We begin with the raw amino-acid sequence, 114 residues long: Pole-localizer protein TmaR (114 aa).

Residues 70–111 adopt a coiled-coil conformation; the sequence is RDDYESRVDDYTIRNAELSKQRREASTKMKEQKKAHAELLKN. The tract at residues 89-114 is disordered; it reads KQRREASTKMKEQKKAHAELLKNAEK.

It belongs to the pole-localizer TmaR family.

Its subcellular location is the cytoplasm. In terms of biological role, pole-localizer protein involved in the regulation of several cellular processes. The sequence is that of Pole-localizer protein TmaR from Haemophilus influenzae (strain 86-028NP).